A 404-amino-acid chain; its full sequence is Intracellular hyaluronan-binding protein 4.L (404 aa).

Disordered stretches follow at residues 1-21 (MRLD…MQDN), 51-288 (LTRR…QEMS), and 359-379 (LTRP…REEA). A compositionally biased stretch (polar residues) spans 8–19 (ETPSSPVNTEMQ). 3 stretches are compositionally biased toward basic and acidic residues: residues 71–81 (GKKESQKDRKA), 145–159 (KVDR…REVR), and 165–184 (RSNE…DKQM). Gly residues predominate over residues 188 to 200 (GGRGGMRGRGRGG). 2 stretches are compositionally biased toward basic and acidic residues: residues 205 to 233 (TEND…DKRG) and 270 to 281 (EEHAKVPEEKNE).

It belongs to the SERBP1-HABP4 family. As to quaternary structure, associates with ribosomes; promoting ribosome stabilization. Interacts with eef2/eEF2; promoting ribosome stabilization.

The protein resides in the nucleus. The protein localises to the cytoplasm. It localises to the stress granule. It is found in the nucleolus. Its subcellular location is the nucleus speckle. The protein resides in the cajal body. Its function is as follows. Ribosome-binding protein that promotes ribosome hibernation, a process during which ribosomes are stabilized in an inactive state and preserved from proteasomal degradation. Acts via its association with eef2/eEF2 factor at the A-site of the ribosome, promoting ribosome stabilization in an inactive state compatible with storage. Plays a key role in ribosome hibernation in the mature egg by promoting ribosome stabilization. Ribosomes, which are produced in large quantities during oogenesis, are stored and translationally repressed in the egg and early embryo. In Xenopus laevis (African clawed frog), this protein is Intracellular hyaluronan-binding protein 4.L.